Here is a 173-residue protein sequence, read N- to C-terminus: Acireductone dioxygenase (173 aa).

Positions 1–20 (MKVYEYDNSTEDQREDHDSG) are disordered. Positions 81, 83, 87, and 126 each coordinate Fe(2+). Residues His81, His83, Glu87, and His126 each contribute to the Ni(2+) site.

The protein belongs to the acireductone dioxygenase (ARD) family. It depends on Fe(2+) as a cofactor. Ni(2+) serves as cofactor.

The protein resides in the cytoplasm. It is found in the nucleus. The catalysed reaction is 1,2-dihydroxy-5-(methylsulfanyl)pent-1-en-3-one + O2 = 4-methylsulfanyl-2-oxobutanoate + formate + 2 H(+). It carries out the reaction 1,2-dihydroxy-5-(methylsulfanyl)pent-1-en-3-one + O2 = 3-(methylsulfanyl)propanoate + CO + formate + 2 H(+). The protein operates within amino-acid biosynthesis; L-methionine biosynthesis via salvage pathway; L-methionine from S-methyl-5-thio-alpha-D-ribose 1-phosphate: step 5/6. Functionally, catalyzes 2 different reactions between oxygen and the acireductone 1,2-dihydroxy-3-keto-5-methylthiopentene (DHK-MTPene) depending upon the metal bound in the active site. Fe-containing acireductone dioxygenase (Fe-ARD) produces formate and 2-keto-4-methylthiobutyrate (KMTB), the alpha-ketoacid precursor of methionine in the methionine recycle pathway. Ni-containing acireductone dioxygenase (Ni-ARD) produces methylthiopropionate, carbon monoxide and formate, and does not lie on the methionine recycle pathway. This is Acireductone dioxygenase from Tuber melanosporum (strain Mel28) (Perigord black truffle).